The sequence spans 365 residues: Chaperone protein DnaJ (365 aa).

The region spanning 5–71 (DFYEILGIAK…QKRQAYDQFG (67 aa)) is the J domain. The segment at 128–206 (GTTVKIRIPK…CHGKGVVHKQ (79 aa)) adopts a CR-type zinc-finger fold. Residues Cys141, Cys144, Cys158, Cys161, Cys180, Cys183, Cys194, and Cys197 each coordinate Zn(2+). CXXCXGXG motif repeat units lie at residues 141–148 (CDTCSGTG), 158–165 (CLTCGGAG), 180–187 (CNACSGTG), and 194–201 (CNNCHGKG).

Belongs to the DnaJ family. In terms of assembly, homodimer. Zn(2+) is required as a cofactor.

It localises to the cytoplasm. Its function is as follows. Participates actively in the response to hyperosmotic and heat shock by preventing the aggregation of stress-denatured proteins and by disaggregating proteins, also in an autonomous, DnaK-independent fashion. Unfolded proteins bind initially to DnaJ; upon interaction with the DnaJ-bound protein, DnaK hydrolyzes its bound ATP, resulting in the formation of a stable complex. GrpE releases ADP from DnaK; ATP binding to DnaK triggers the release of the substrate protein, thus completing the reaction cycle. Several rounds of ATP-dependent interactions between DnaJ, DnaK and GrpE are required for fully efficient folding. Also involved, together with DnaK and GrpE, in the DNA replication of plasmids through activation of initiation proteins. This chain is Chaperone protein DnaJ, found in Vesicomyosocius okutanii subsp. Calyptogena okutanii (strain HA).